A 105-amino-acid chain; its full sequence is Small ribosomal subunit protein uS10 (105 aa).

The protein belongs to the universal ribosomal protein uS10 family. In terms of assembly, part of the 30S ribosomal subunit.

Functionally, involved in the binding of tRNA to the ribosomes. The protein is Small ribosomal subunit protein uS10 of Legionella pneumophila (strain Paris).